Here is a 484-residue protein sequence, read N- to C-terminus: Phosphomethylpyrimidine synthase (484 aa).

Substrate is bound by residues N97, M126, Y156, H192, 212–214 (SRG), 253–256 (DSLR), and E292. H296 lines the Zn(2+) pocket. Y319 contributes to the substrate binding site. A Zn(2+)-binding site is contributed by H360. 3 residues coordinate [4Fe-4S] cluster: C440, C443, and C448.

This sequence belongs to the ThiC family. [4Fe-4S] cluster serves as cofactor.

The enzyme catalyses 5-amino-1-(5-phospho-beta-D-ribosyl)imidazole + S-adenosyl-L-methionine = 4-amino-2-methyl-5-(phosphooxymethyl)pyrimidine + CO + 5'-deoxyadenosine + formate + L-methionine + 3 H(+). Its pathway is cofactor biosynthesis; thiamine diphosphate biosynthesis. In terms of biological role, catalyzes the synthesis of the hydroxymethylpyrimidine phosphate (HMP-P) moiety of thiamine from aminoimidazole ribotide (AIR) in a radical S-adenosyl-L-methionine (SAM)-dependent reaction. This is Phosphomethylpyrimidine synthase from Synechococcus sp. (strain CC9605).